The chain runs to 32 residues: MSMTSDDIIYVVFALGLVVSFGLGAITAGVFR.

A helical membrane pass occupies residues 8–28 (IIYVVFALGLVVSFGLGAITA).

It belongs to the inovirus G7P protein family.

It is found in the virion. The protein localises to the host membrane. Its function is as follows. May initiate with G9P the virion concomitant assembly-budding process, by interacting with the packaging signal of the viral genome. The assembly-budding takes place at the host inner membrane. In turn, G7P and G9P are present at the end of the filamentous virion that emerges first from the bacterial host. This chain is Tail virion protein G7P (VII), found in Escherichia coli (Bacteriophage IKe).